The following is a 248-amino-acid chain: Probable transcriptional regulatory protein NGR_c27950 (248 aa).

The protein belongs to the TACO1 family.

It localises to the cytoplasm. The chain is Probable transcriptional regulatory protein NGR_c27950 from Sinorhizobium fredii (strain NBRC 101917 / NGR234).